Consider the following 160-residue polypeptide: Transcription elongation factor GreA (160 aa).

The stretch at 3–84 (NIVDDKILLT…SKAKIIKADL (82 aa)) forms a coiled coil.

This sequence belongs to the GreA/GreB family.

Its function is as follows. Necessary for efficient RNA polymerase transcription elongation past template-encoded arresting sites. The arresting sites in DNA have the property of trapping a certain fraction of elongating RNA polymerases that pass through, resulting in locked ternary complexes. Cleavage of the nascent transcript by cleavage factors such as GreA or GreB allows the resumption of elongation from the new 3'terminus. GreA releases sequences of 2 to 3 nucleotides. This is Transcription elongation factor GreA from Mesomycoplasma hyopneumoniae (strain J / ATCC 25934 / NCTC 10110) (Mycoplasma hyopneumoniae).